A 720-amino-acid polypeptide reads, in one-letter code: MNHQNLLVELFVEELPPKALQKLGDAFAGVLLEQLQAQGLTSAHSQLTAFASPRRLAAHITEVLPAAADKAVSQKLMPVAVGLDASGQPTPALLKKLTALGADAASVPQLKRVHDGKAEVLFFESMAKGALLADGLQKALDEAIAKLPIPKVMRYQLQDGWTSVHFVRPAHGLVALHGTQVLVGVQALGLTAGNTTHGHRFEASVDPVVIQSADSYAEQLRSEGAVIASFAERRAEIARQLQAAADRVGGGVRPIEDAALLDEVTALVERPNVLVCEFEKEFLAVPQECLILTMKANQKYFPLLDAEGKLTHQFLVVSNISPQDASAVIQGNERVVRPRLADAKFFFDQDRKKTLVSRVDQLAKVVYHNKLGTQGERVERVRHIAKAIATQLFTALAQGNAALDSQEGEIAQDYLLTCVDNAALLAKTDLVTDMVGEFPELQGIMGGYYAVSDGLPDEVAHAIEDHYKPRFAGDALPRENVGVVVALADKLETLVGMFGIGNLPTGDRDPFALRRHALGVIRMLVEKELPLDLDALLASAVPAFGDKIEDTSAQLADFIYDRLAGSLREQGYSAQEVDAVIALRPQRLALVPRQLEAVRAFTQLEEAPALAAANKRVTNILKKAGEVDPHVNEELLQEPAEKDLYAALQRFVPEANAQFDSGDYTASLQTLAVLRAPVDAFFDDVMVNAEELALRLNRQGLLKKLHMAMNRVADLSRLAV.

The protein belongs to the class-II aminoacyl-tRNA synthetase family. Tetramer of two alpha and two beta subunits.

The protein localises to the cytoplasm. It catalyses the reaction tRNA(Gly) + glycine + ATP = glycyl-tRNA(Gly) + AMP + diphosphate. This chain is Glycine--tRNA ligase beta subunit, found in Acidovorax sp. (strain JS42).